We begin with the raw amino-acid sequence, 388 residues long: Serpin B11 (388 aa).

The tract at residues 338-362 is RCL; sequence EEGTEAAAATGESISVKRLPVTVQF.

The protein belongs to the serpin family. Ov-serpin subfamily. In terms of tissue distribution, expressed in eye, lung, lymphocytes, thymus, stomach, uterus, heart, brain, liver, skeletal muscle, and in day 7, 15, and 17 embryos.

The protein localises to the cytoplasm. Inhibitor of serine proteases. Has moderate inhibitory activity for trypsin-like peptidases, but also some activity with cysteine peptidases, cathepsin L, K, and V, and the serine peptidase, tryptase gamma. This is Serpin B11 (Serpinb11) from Mus musculus (Mouse).